Consider the following 173-residue polypeptide: NADH-ubiquinone oxidoreductase chain 6 (173 aa).

Transmembrane regions (helical) follow at residues 1 to 21 (MTYV…AVAS), 25 to 45 (PYFG…VLIW), 53 to 73 (LVLF…SAAL), 82 to 102 (LGSW…FGIL), and 142 to 162 (GVLL…LELV).

It belongs to the complex I subunit 6 family.

It is found in the mitochondrion membrane. It catalyses the reaction a ubiquinone + NADH + 5 H(+)(in) = a ubiquinol + NAD(+) + 4 H(+)(out). Functionally, core subunit of the mitochondrial membrane respiratory chain NADH dehydrogenase (Complex I) that is believed to belong to the minimal assembly required for catalysis. Complex I functions in the transfer of electrons from NADH to the respiratory chain. The immediate electron acceptor for the enzyme is believed to be ubiquinone. This is NADH-ubiquinone oxidoreductase chain 6 (MT-ND6) from Tetraodon nigroviridis (Spotted green pufferfish).